The sequence spans 364 residues: tRNA-specific 2-thiouridylase MnmA (364 aa).

Residues 6–13 (AMSGGVDS) and Leu32 contribute to the ATP site. Cys101 functions as the Nucleophile in the catalytic mechanism. Cys101 and Cys193 are disulfide-bonded. Gly125 serves as a coordination point for ATP. The interaction with tRNA stretch occupies residues 143 to 145 (KDQ). Cys193 serves as the catalytic Cysteine persulfide intermediate.

It belongs to the MnmA/TRMU family.

It localises to the cytoplasm. It catalyses the reaction S-sulfanyl-L-cysteinyl-[protein] + uridine(34) in tRNA + AH2 + ATP = 2-thiouridine(34) in tRNA + L-cysteinyl-[protein] + A + AMP + diphosphate + H(+). Functionally, catalyzes the 2-thiolation of uridine at the wobble position (U34) of tRNA, leading to the formation of s(2)U34. The chain is tRNA-specific 2-thiouridylase MnmA from Rhodococcus opacus (strain B4).